Here is a 1352-residue protein sequence, read N- to C-terminus: Ubiquitin carboxyl-terminal hydrolase 31 (1352 aa).

The span at 1 to 16 shows a compositional bias: low complexity; the sequence is MSKVTAPGSGPPAAAS. 2 disordered regions span residues 1-62 and 79-119; these read MSKV…RSVG and SSEG…PPAC. Over residues 32-43 the composition is skewed to gly residues; it reads RAGGGGAGGPGA. Low complexity predominate over residues 44 to 62; the sequence is SGPAAPSSPSSPSSARSVG. Pro residues predominate over residues 95 to 117; that stretch reads PPGPAAAPTPPPCPPPPASPAPP. The USP domain occupies 128-765; the sequence is AGLRNHGNTC…TAYILFYQRR (638 aa). Cys-137 serves as the catalytic Nucleophile. Positions 162–185 are disordered; the sequence is RAGRPEPSPDPEQPAGRGAQGQGE. Residue His-723 is the Proton acceptor of the active site. 3 disordered regions span residues 812–835, 919–939, and 951–1352; these read LASL…FSTR, SSSY…AVGR, and DESD…QKPQ. The span at 958 to 970 shows a compositional bias: polar residues; it reads LNSSVVDTQSKHS. Composition is skewed to low complexity over residues 992–1001, 1051–1070, 1078–1089, and 1101–1138; these read VDQSDSVDSS, SSLS…SLKP, DSSSRGSGRHSS, and PKSQ…GPAT. Basic and acidic residues predominate over residues 1148-1159; sequence RTSDHSLSREGS. The segment covering 1160-1181 has biased composition (polar residues); sequence RQSLGSDRASATSTSKPNSPRV. Residues 1198–1210 show a composition bias toward low complexity; the sequence is SSSMASLRSPSTS. Composition is skewed to basic and acidic residues over residues 1215 to 1225 and 1234 to 1243; these read LKRDSKSEDKG and RQKETRRSTD. The span at 1251-1264 shows a compositional bias: low complexity; that stretch reads SKKAGGSSVKSVCK. An N6-acetyllysine modification is found at Lys-1264. Composition is skewed to polar residues over residues 1278–1290 and 1341–1352; these read PASQ…TTGK and MQTSARPSQKPQ.

It belongs to the peptidase C19 family. Post-translationally, acetylated at Lys-1264. Acetylation decreases activity. Deacetylated by SIRT1. Widely expressed.

The enzyme catalyses Thiol-dependent hydrolysis of ester, thioester, amide, peptide and isopeptide bonds formed by the C-terminal Gly of ubiquitin (a 76-residue protein attached to proteins as an intracellular targeting signal).. Functionally, deubiquitinase that recognizes and hydrolyzes the peptide bond at the C-terminal Gly of ubiquitin. May play a role in the regulation of NF-kappa-B signaling pathway by deubiquitinating TRAF2. (Microbial infection) Plays a positive role in foot-and-mouth disease and classical swine fever viral infection. Mechanistically, associates with internal ribosomal entry site (IRES) element within the 5'-untranslated region of viral genomes to promote translation of the virus-encoded polyprotein. The protein is Ubiquitin carboxyl-terminal hydrolase 31 (USP31) of Homo sapiens (Human).